A 342-amino-acid chain; its full sequence is Isopentenyl-diphosphate delta-isomerase (342 aa).

11 to 12 is a substrate binding site; that stretch reads RK. FMN is bound by residues S68, 69-71, S99, and N127; that span reads SMT. Residue 99–101 participates in substrate binding; sequence SMR. E163 contributes to the Mg(2+) binding site. FMN-binding positions include K194, T224, and 295-296; that span reads AG.

It belongs to the IPP isomerase type 2 family. In terms of assembly, homooctamer. Dimer of tetramers. It depends on FMN as a cofactor. NADPH serves as cofactor. Mg(2+) is required as a cofactor.

The protein resides in the cytoplasm. It carries out the reaction isopentenyl diphosphate = dimethylallyl diphosphate. Its function is as follows. Involved in the biosynthesis of isoprenoids. Catalyzes the 1,3-allylic rearrangement of the homoallylic substrate isopentenyl (IPP) to its allylic isomer, dimethylallyl diphosphate (DMAPP). The sequence is that of Isopentenyl-diphosphate delta-isomerase from Rickettsia typhi (strain ATCC VR-144 / Wilmington).